Reading from the N-terminus, the 304-residue chain is MSTRTEAVKAYLLDLQDRICTALEQEDGNAHFVEDAWTRPAGGGGRTRVVENGAVIEKGGVNFSHVFGSNLPPSASAHRPELAGRGFEALGVSLVIHPHSPHVPTSHANVRFFIAEKEGEEPVWWFGGGFDLTPYYGVEEDCVHWHRVAERACAPFGDDVYPRYKAWCDSYFHLKHRDEPRGIGGLFFDDVNQWDFDTSFAFIRAIGDAFINAYLPIVRRRKAAAYTVQQREFQEFRRGRYVEFNLVYDRGTLFGLQSGGRTESILMSLPPQVRWGYDWKAAPGSEEARLTDYFLTDRDWLADN.

Residue serine 93 coordinates substrate. A divalent metal cation is bound by residues histidine 97 and histidine 107. Histidine 107 acts as the Proton donor in catalysis. Residue 109–111 (NVR) participates in substrate binding. Histidine 146 and histidine 176 together coordinate a divalent metal cation. The important for dimerization stretch occupies residues 241-276 (YVEFNLVYDRGTLFGLQSGGRTESILMSLPPQVRWG). 259-261 (GGR) contacts substrate.

It belongs to the aerobic coproporphyrinogen-III oxidase family. Homodimer. It depends on a divalent metal cation as a cofactor.

It is found in the cytoplasm. The enzyme catalyses coproporphyrinogen III + O2 + 2 H(+) = protoporphyrinogen IX + 2 CO2 + 2 H2O. It functions in the pathway porphyrin-containing compound metabolism; protoporphyrin-IX biosynthesis; protoporphyrinogen-IX from coproporphyrinogen-III (O2 route): step 1/1. In terms of biological role, involved in the heme biosynthesis. Catalyzes the aerobic oxidative decarboxylation of propionate groups of rings A and B of coproporphyrinogen-III to yield the vinyl groups in protoporphyrinogen-IX. This is Oxygen-dependent coproporphyrinogen-III oxidase from Pseudomonas syringae pv. tomato (strain ATCC BAA-871 / DC3000).